Here is a 344-residue protein sequence, read N- to C-terminus: L-threonine 3-dehydrogenase (344 aa).

Position 42 (Cys42) interacts with Zn(2+). Active-site charge relay system residues include Thr44 and His47. Positions 67, 68, 97, 100, 103, and 111 each coordinate Zn(2+). Residues Ile179, Asp199, Arg204, 266–268 (LGI), and 290–291 (IY) each bind NAD(+).

It belongs to the zinc-containing alcohol dehydrogenase family. In terms of assembly, homotetramer. The cofactor is Zn(2+).

The protein resides in the cytoplasm. It carries out the reaction L-threonine + NAD(+) = (2S)-2-amino-3-oxobutanoate + NADH + H(+). It participates in amino-acid degradation; L-threonine degradation via oxydo-reductase pathway; glycine from L-threonine: step 1/2. In terms of biological role, catalyzes the NAD(+)-dependent oxidation of L-threonine to 2-amino-3-ketobutyrate. This Chelativorans sp. (strain BNC1) protein is L-threonine 3-dehydrogenase.